Consider the following 93-residue polypeptide: Phosphoribosyl-ATP pyrophosphatase (93 aa).

Belongs to the PRA-PH family.

The protein resides in the cytoplasm. It catalyses the reaction 1-(5-phospho-beta-D-ribosyl)-ATP + H2O = 1-(5-phospho-beta-D-ribosyl)-5'-AMP + diphosphate + H(+). The protein operates within amino-acid biosynthesis; L-histidine biosynthesis; L-histidine from 5-phospho-alpha-D-ribose 1-diphosphate: step 2/9. In Mycolicibacterium paratuberculosis (strain ATCC BAA-968 / K-10) (Mycobacterium paratuberculosis), this protein is Phosphoribosyl-ATP pyrophosphatase.